We begin with the raw amino-acid sequence, 316 residues long: Protoheme IX farnesyltransferase 2 (316 aa).

Polar residues predominate over residues 1–15 (MEQNLNSEQKPQSSA). Positions 1–24 (MEQNLNSEQKPQSSAKPRGKSSRS) are disordered. Transmembrane regions (helical) follow at residues 62 to 82 (IPEMIFSTVGSALVIGAAGAF), 117 to 137 (IVMLIIGLAVLALASPLAAAF), 163 to 183 (IGSISGAVPPLIGWSAVSTDI), 188 to 208 (IARFIFVMVIWQMPHFYAIAI), 231 to 251 (TYYQTNFYLILLILSSFLFGS), 252 to 272 (LSVGIMLVALLLSIAWLVMSI), and 293 to 313 (LFHMTILFTTVIVYSLVGVIF).

Belongs to the UbiA prenyltransferase family. Protoheme IX farnesyltransferase subfamily. Interacts with CtaA.

It is found in the cell membrane. It catalyses the reaction heme b + (2E,6E)-farnesyl diphosphate + H2O = Fe(II)-heme o + diphosphate. It functions in the pathway porphyrin-containing compound metabolism; heme O biosynthesis; heme O from protoheme: step 1/1. Its function is as follows. Converts heme B (protoheme IX) to heme O by substitution of the vinyl group on carbon 2 of heme B porphyrin ring with a hydroxyethyl farnesyl side group. This Lysinibacillus sphaericus (strain C3-41) protein is Protoheme IX farnesyltransferase 2.